A 298-amino-acid polypeptide reads, in one-letter code: Peroxisomal 2,4-dienoyl-CoA reductase [(3E)-enoyl-CoA-producing] (298 aa).

NADP(+) is bound at residue G19–I24. R44 contacts substrate. An NADP(+)-binding site is contributed by D69. Residues R71, F101, and S109 to N111 each bind substrate. Residues K173 and P200–T206 each bind NADP(+). Positions S279–L298 are disordered. The Microbody targeting signal motif lies at S296–L298.

This sequence belongs to the short-chain dehydrogenases/reductases (SDR) family. 2,4-dienoyl-CoA reductase subfamily.

Its subcellular location is the peroxisome. The enzyme catalyses a (2E,4Z)-dienoyl-CoA + NADPH + H(+) = a 4,5-saturated-(3E)-enoyl-CoA + NADP(+). The catalysed reaction is a (2E,4E)-dienoyl-CoA + NADPH + H(+) = a 4,5-saturated-(3E)-enoyl-CoA + NADP(+). Its function is as follows. Auxiliary enzyme of beta-oxidation. Participates in the degradation of unsaturated fatty enoyl-CoA esters having double bonds in both even- and odd-numbered positions in peroxisome. Catalyzes the NADP-dependent reduction of 2,4-dienoyl-CoA to yield trans-3-enoyl-CoA. The chain is Peroxisomal 2,4-dienoyl-CoA reductase [(3E)-enoyl-CoA-producing] from Arabidopsis thaliana (Mouse-ear cress).